Consider the following 396-residue polypeptide: Proteasome-activating nucleotidase (396 aa).

The stretch at 16-57 forms a coiled coil; it reads VTYLKRRIRQLELQVRMLEADKERLERELSRLRSEMSRLRQP. Residues 181 to 186 and H320 contribute to the ATP site; that span reads GCGKTL. Residues 394-396 form a docks into pockets in the proteasome alpha-ring to cause gate opening region; the sequence is IYG.

The protein belongs to the AAA ATPase family. In terms of assembly, homohexamer. The hexameric complex has a two-ring architecture resembling a top hat that caps the 20S proteasome core at one or both ends. Upon ATP-binding, the C-terminus of PAN interacts with the alpha-rings of the proteasome core by binding to the intersubunit pockets.

The protein localises to the cytoplasm. Its function is as follows. ATPase which is responsible for recognizing, binding, unfolding and translocation of substrate proteins into the archaeal 20S proteasome core particle. Is essential for opening the gate of the 20S proteasome via an interaction with its C-terminus, thereby allowing substrate entry and access to the site of proteolysis. Thus, the C-termini of the proteasomal ATPase function like a 'key in a lock' to induce gate opening and therefore regulate proteolysis. Unfolding activity requires energy from ATP hydrolysis, whereas ATP binding alone promotes ATPase-20S proteasome association which triggers gate opening, and supports translocation of unfolded substrates. The chain is Proteasome-activating nucleotidase from Pyrococcus furiosus (strain ATCC 43587 / DSM 3638 / JCM 8422 / Vc1).